Reading from the N-terminus, the 329-residue chain is Sex comb on midleg-like protein 1 (329 aa).

A disordered region spans residues 136-160 (SYSPTLPVSRRENNSPSNLPRPSFC). 2 positions are modified to phosphoserine: Ser138 and Ser238. The SAM domain maps to 258 to 325 (WSVEAVVLFL…YYIDRLKQGK (68 aa)).

It belongs to the SCM family.

The protein localises to the nucleus. Functionally, putative Polycomb group (PcG) protein. PcG proteins act by forming multiprotein complexes, which are required to maintain the transcriptionally repressive state of homeotic genes throughout development. May be involved in spermatogenesis during sexual maturation. The chain is Sex comb on midleg-like protein 1 (SCML1) from Pongo pygmaeus (Bornean orangutan).